A 356-amino-acid chain; its full sequence is Peptide-N(4)-(N-acetyl-beta-glucosaminyl)asparagine amidase (356 aa).

Zn(2+)-binding residues include C129, C132, C163, and C166. The active-site Nucleophile is the C189. Active-site residues include H216 and D233. E236 contacts substrate. A disordered region spans residues 300-356; it reads IRQNLSPSEKEELKREDEAEERELASYNADEPQEAQMPRQSGSVEWTKARGEGGSDD. Composition is skewed to basic and acidic residues over residues 307-316 and 346-356; these read SEKEELKRED and TKARGEGGSDD.

It belongs to the transglutaminase-like superfamily. PNGase family. It depends on Zn(2+) as a cofactor.

It is found in the cytoplasm. It catalyses the reaction Hydrolysis of an N(4)-(acetyl-beta-D-glucosaminyl)asparagine residue in which the glucosamine residue may be further glycosylated, to yield a (substituted) N-acetyl-beta-D-glucosaminylamine and a peptide containing an aspartate residue.. In terms of biological role, specifically deglycosylates the denatured form of N-linked glycoproteins in the cytoplasm and assists their proteasome-mediated degradation. Cleaves the beta-aspartyl-glucosamine (GlcNAc) of the glycan and the amide side chain of Asn, converting Asn to Asp. Prefers proteins containing high-mannose over those bearing complex type oligosaccharides. Can recognize misfolded proteins in the endoplasmic reticulum that are exported to the cytosol to be destroyed and deglycosylate them, while it has no activity toward native proteins. Deglycosylation is a prerequisite for subsequent proteasome-mediated degradation of some, but not all, misfolded glycoproteins. In Yarrowia lipolytica (strain CLIB 122 / E 150) (Yeast), this protein is Peptide-N(4)-(N-acetyl-beta-glucosaminyl)asparagine amidase (PNG1).